Reading from the N-terminus, the 535-residue chain is MLPVSRLCVRSSLRKLVFVRFVSCTSCGVTLQNNNVRGTGFYTPPKAQIERKRPVIEDLKYLLFSQDLQSLKSELSAEERPKKNKPLICKRCNDALHHNTFSKEDFRRYSMQEVYRHVPAGADIYHVVPLTDFPLQLNSAVLKDSRYNSALLLSKGDQVTPDKSLLQRKAPQFFKDMLRLKMNYNSNKSIAFSASKGWNIQSVYSVLRSNSFLIGCPNSGKSTLVNALLKKFPSLKPSEGNNASEAEIVRGAGVSNIPNMTRDLQSYNIGSKVINDLPGYSTNYGSPGPEDALDAKVLEKIQKTHLFKKTKLVKQRYTSLKGTDAGRCYTVSGIFYLVPPPDTINQVVNYIPGNERQYRNIDKALSVVNSEHACPEKGPLRQYVGVQKAMESKDNYVRHVLPPFQGSIEVVLKEIGYFQLKTTGKYKFLGLHEVWVPKGVDVCIREPIARLIDEGYEGYLSSEGKKKAIPEKREVFSATYPMSFEETDTLQKMKEMFLERTKNDVLARKFISSNPLKIIGTAQKEAPNLYWYYKW.

A mitochondrion-targeting transit peptide spans 1–38; the sequence is MLPVSRLCVRSSLRKLVFVRFVSCTSCGVTLQNNNVRG. Residues 111-283 enclose the CP-type G domain; sequence MQEVYRHVPA…INDLPGYSTN (173 aa).

The protein belongs to the TRAFAC class YlqF/YawG GTPase family. GEP3 subfamily.

The protein localises to the mitochondrion. May be involved in the mitochondrial lipid metabolism. The sequence is that of Genetic interactor of prohibitins 3, mitochondrial (GEP3) from Lachancea thermotolerans (strain ATCC 56472 / CBS 6340 / NRRL Y-8284) (Yeast).